The sequence spans 341 residues: Zinc transporter ZIP11 (341 aa).

A run of 7 helical transmembrane segments spans residues 12-32, 44-64, 72-92, 193-213, 262-284, 289-306, and 321-341; these read LLGTFFTWGLTAAGAALVFVF, LGFAAGVMLAASYWSLLAPAV, GFGSLAFLPVAIGFTLGAAFV, IALLILAITIHNIPEGLAVGV, FWYGQLSGMVEPLAGVFGAFAVV, ILPYALAFAAGAMVYVIM, and LASWASILGFVVMMSLDVGLG.

The protein belongs to the ZIP transporter (TC 2.A.5) family.

It localises to the cell membrane. The protein resides in the nucleus. The protein localises to the cytoplasm. Its subcellular location is the golgi apparatus. It catalyses the reaction Zn(2+)(in) = Zn(2+)(out). The catalysed reaction is Cu(2+)(in) = Cu(2+)(out). Zinc importer that regulates cytosolic zinc concentrations either via zinc influx from the extracellular compartment or efflux from intracellular organelles such as Golgi apparatus. May transport copper ions as well. The transport mechanism remains to be elucidated. This is Zinc transporter ZIP11 (SLC39A11) from Bos taurus (Bovine).